The following is a 359-amino-acid chain: UPF0283 membrane protein Atu1356 (359 aa).

The tract at residues 1 to 39 (MKAPTQNDPQTRRPAAFTLETEEAARPSATQKRAPRSFD) is disordered. Helical transmembrane passes span 75-95 (FGKL…GLWA) and 108-128 (WLGY…LALV).

This sequence belongs to the UPF0283 family.

It localises to the cell inner membrane. The chain is UPF0283 membrane protein Atu1356 from Agrobacterium fabrum (strain C58 / ATCC 33970) (Agrobacterium tumefaciens (strain C58)).